Here is a 219-residue protein sequence, read N- to C-terminus: Large ribosomal subunit protein uL3 (219 aa).

The disordered stretch occupies residues 113–142 (TTKGHGYQGNIHKDNQSRGPMAHGSRYHRR).

This sequence belongs to the universal ribosomal protein uL3 family. In terms of assembly, part of the 50S ribosomal subunit. Forms a cluster with proteins L14 and L19.

In terms of biological role, one of the primary rRNA binding proteins, it binds directly near the 3'-end of the 23S rRNA, where it nucleates assembly of the 50S subunit. The chain is Large ribosomal subunit protein uL3 from Limosilactobacillus reuteri (strain DSM 20016) (Lactobacillus reuteri).